We begin with the raw amino-acid sequence, 507 residues long: MSVELWQQCVELLREELPAQQFNTWIRPLQVEAEGDELRVYAPNRFVLDWVNEKYLGRVLELLDEHGNGLAPSLSLLIGSKRSSAPRAAPNAPLAAAQVSQAQANAAPASAPAPAPTPAPTKRTTQKTEEISEEPSRDSFDPMAGAASQQAPVRAEQRTVQVEGALKHTSYLNRTFTFENFVEGKSNQLARAAAWQVADNPKHGYNPLFLYGGVGLGKTHLMHAVGNHLLKKNPNAKVVYLHSERFVADMVKALQLNAINEFKRFYRSVDALLIDDIQFFARKERSQEEFFHTFNALLEGGQQVILTSDRYPKEIEGLEERLKSRFGWGLTVAVEPPELETRVAILMKKADQAKVELPHDAAFFIAQRIRSNVRELEGALKRVIAHSHFMGRDITIELIRESLKDLLALQDKLVSVDNIQRTVAEYYKIKISDLLSKRRSRSVARPRQVAMALSKELTNHSLPEIGDVFGGRDHTTVLHACRKINELKESDADIREDYKNLLRTLTT.

The interval 1–87 is domain I, interacts with DnaA modulators; it reads MSVELWQQCV…IGSKRSSAPR (87 aa). The segment covering 85-110 has biased composition (low complexity); sequence APRAAPNAPLAAAQVSQAQANAAPAS. Residues 85–158 are disordered; that stretch reads APRAAPNAPL…QQAPVRAEQR (74 aa). A domain II region spans residues 87–170; that stretch reads RAAPNAPLAA…QVEGALKHTS (84 aa). The segment covering 126 to 140 has biased composition (basic and acidic residues); sequence QKTEEISEEPSRDSF. Residues 171 to 387 form a domain III, AAA+ region region; that stretch reads YLNRTFTFEN…GALKRVIAHS (217 aa). Residues Gly-215, Gly-217, Lys-218, and Thr-219 each contribute to the ATP site. The tract at residues 388-507 is domain IV, binds dsDNA; it reads HFMGRDITIE…YKNLLRTLTT (120 aa).

The protein belongs to the DnaA family. As to quaternary structure, oligomerizes as a right-handed, spiral filament on DNA at oriC.

The protein resides in the cytoplasm. Plays an essential role in the initiation and regulation of chromosomal replication. ATP-DnaA binds to the origin of replication (oriC) to initiate formation of the DNA replication initiation complex once per cell cycle. Binds the DnaA box (a 9 base pair repeat at the origin) and separates the double-stranded (ds)DNA. Forms a right-handed helical filament on oriC DNA; dsDNA binds to the exterior of the filament while single-stranded (ss)DNA is stabiized in the filament's interior. The ATP-DnaA-oriC complex binds and stabilizes one strand of the AT-rich DNA unwinding element (DUE), permitting loading of DNA polymerase. After initiation quickly degrades to an ADP-DnaA complex that is not apt for DNA replication. Binds acidic phospholipids. The polypeptide is Chromosomal replication initiator protein DnaA (Pseudomonas fluorescens (strain Pf0-1)).